The chain runs to 470 residues: Protein nucleotidyltransferase YdiU (470 aa).

Residues G86, G88, R89, K109, D121, G122, R172, and R179 each coordinate ATP. D244 functions as the Proton acceptor in the catalytic mechanism. Residues N245 and D254 each contribute to the Mg(2+) site. D254 lines the ATP pocket.

It belongs to the SELO family. Requires Mg(2+) as cofactor. Mn(2+) is required as a cofactor.

It carries out the reaction L-seryl-[protein] + ATP = 3-O-(5'-adenylyl)-L-seryl-[protein] + diphosphate. The catalysed reaction is L-threonyl-[protein] + ATP = 3-O-(5'-adenylyl)-L-threonyl-[protein] + diphosphate. The enzyme catalyses L-tyrosyl-[protein] + ATP = O-(5'-adenylyl)-L-tyrosyl-[protein] + diphosphate. It catalyses the reaction L-histidyl-[protein] + UTP = N(tele)-(5'-uridylyl)-L-histidyl-[protein] + diphosphate. It carries out the reaction L-seryl-[protein] + UTP = O-(5'-uridylyl)-L-seryl-[protein] + diphosphate. The catalysed reaction is L-tyrosyl-[protein] + UTP = O-(5'-uridylyl)-L-tyrosyl-[protein] + diphosphate. Its function is as follows. Nucleotidyltransferase involved in the post-translational modification of proteins. It can catalyze the addition of adenosine monophosphate (AMP) or uridine monophosphate (UMP) to a protein, resulting in modifications known as AMPylation and UMPylation. This chain is Protein nucleotidyltransferase YdiU, found in Roseobacter denitrificans (strain ATCC 33942 / OCh 114) (Erythrobacter sp. (strain OCh 114)).